The primary structure comprises 695 residues: U1 snRNP-associated protein usp107 (695 aa).

The segment covering 85-96 (RDNESQQKDRKN) has biased composition (basic and acidic residues). Positions 85–134 (RDNESQQKDRKNLPRNQKSNEIQEKQTFQTPSSEKSTTERESRPFVPPNS) are disordered. Positions 98-113 (PRNQKSNEIQEKQTFQ) are enriched in polar residues. Positions 139–221 (RMLFIGNIPK…PSTRLSLITD (83 aa)) constitute an RRM domain. Residues 265–369 (DVRSRIERAA…NLLSKHRISR (105 aa)) are a coiled coil. Composition is skewed to basic and acidic residues over residues 487–506 (EEDA…RTRG) and 548–561 (SERR…RLLL). Disordered regions lie at residues 487 to 509 (EEDA…GEGA) and 540 to 590 (QTKK…AEKT). One can recognise a PWI domain in the interval 605–695 (ESLWALPIDW…HVLLILRSEA (91 aa)).

Component of the U1 snRNP particle, a subcomplex of the spliceosome. Interacts with prp5 and usp102.

The protein localises to the cytoplasm. It is found in the nucleus. Its function is as follows. Component of the U1 snRNP particle, which recognizes and binds the 5'-splice site of pre-mRNA. Together with other non-snRNP factors, U1 snRNP forms the spliceosomal commitment complex, that targets pre-mRNA to the splicing pathway. The protein is U1 snRNP-associated protein usp107 (usp107) of Schizosaccharomyces pombe (strain 972 / ATCC 24843) (Fission yeast).